Here is a 76-residue protein sequence, read N- to C-terminus: DNA-directed RNA polymerase subunit epsilon (76 aa).

This sequence belongs to the RNA polymerase subunit epsilon family. In terms of assembly, RNAP is composed of a core of 2 alpha, a beta and a beta' subunit. The core is associated with a delta subunit, and at least one of epsilon or omega. When a sigma factor is associated with the core the holoenzyme is formed, which can initiate transcription.

The enzyme catalyses RNA(n) + a ribonucleoside 5'-triphosphate = RNA(n+1) + diphosphate. In terms of biological role, a non-essential component of RNA polymerase (RNAP). In Streptococcus agalactiae serotype Ia (strain ATCC 27591 / A909 / CDC SS700), this protein is DNA-directed RNA polymerase subunit epsilon.